Here is a 225-residue protein sequence, read N- to C-terminus: Uracil-DNA glycosylase (225 aa).

Aspartate 68 serves as the catalytic Proton acceptor.

The protein belongs to the uracil-DNA glycosylase (UDG) superfamily. UNG family.

The protein resides in the cytoplasm. It catalyses the reaction Hydrolyzes single-stranded DNA or mismatched double-stranded DNA and polynucleotides, releasing free uracil.. Excises uracil residues from the DNA which can arise as a result of misincorporation of dUMP residues by DNA polymerase or due to deamination of cytosine. This Mycolicibacterium vanbaalenii (strain DSM 7251 / JCM 13017 / BCRC 16820 / KCTC 9966 / NRRL B-24157 / PYR-1) (Mycobacterium vanbaalenii) protein is Uracil-DNA glycosylase.